The primary structure comprises 243 residues: UPF0758 protein Cyan7425_1778 (243 aa).

An MPN domain is found at 112–235 (TIINDPAVAA…FRSLRQTTKL (124 aa)). Residues His-184, His-186, and Asp-197 each coordinate Zn(2+). Positions 184-197 (HNHPSGNVEPSPED) match the JAMM motif motif.

Belongs to the UPF0758 family.

The protein is UPF0758 protein Cyan7425_1778 of Cyanothece sp. (strain PCC 7425 / ATCC 29141).